Here is a 280-residue protein sequence, read N- to C-terminus: Golgi phosphoprotein 3-like B (280 aa).

Residues 1–32 (MTTLIRRGRRAEEGQERRADSEDSIKDKDEED) are disordered. A compositionally biased stretch (basic and acidic residues) spans 10-32 (RAEEGQERRADSEDSIKDKDEED). A 1,2-diacyl-sn-glycero-3-phospho-(1D-myo-inositol 4-phosphate)-binding residues include tryptophan 62, arginine 71, arginine 152, and arginine 155. The segment at 171–182 (EKQNFLLFDMTT) is beta-hairpin required for oligomerization.

Belongs to the GOLPH3/VPS74 family. Homooligomer.

The protein localises to the golgi apparatus. It localises to the golgi stack membrane. It is found in the trans-Golgi network membrane. Phosphatidylinositol-4-phosphate-binding protein that may play a role in the process of vesicle budding at the Golgi and anterograde transport to the plasma membrane. This Xenopus laevis (African clawed frog) protein is Golgi phosphoprotein 3-like B (golph3l-b).